A 376-amino-acid chain; its full sequence is Lipoyl synthase 1, mitochondrial (376 aa).

Cys-109, Cys-114, Cys-120, Cys-140, Cys-144, Cys-147, and Ser-356 together coordinate [4Fe-4S] cluster. The Radical SAM core domain maps to 125–345 (ETGTATATIM…QTLGMEMGFR (221 aa)).

It belongs to the radical SAM superfamily. Lipoyl synthase family. It depends on [4Fe-4S] cluster as a cofactor.

The protein resides in the mitochondrion. The enzyme catalyses [[Fe-S] cluster scaffold protein carrying a second [4Fe-4S](2+) cluster] + N(6)-octanoyl-L-lysyl-[protein] + 2 oxidized [2Fe-2S]-[ferredoxin] + 2 S-adenosyl-L-methionine + 4 H(+) = [[Fe-S] cluster scaffold protein] + N(6)-[(R)-dihydrolipoyl]-L-lysyl-[protein] + 4 Fe(3+) + 2 hydrogen sulfide + 2 5'-deoxyadenosine + 2 L-methionine + 2 reduced [2Fe-2S]-[ferredoxin]. It functions in the pathway protein modification; protein lipoylation via endogenous pathway; protein N(6)-(lipoyl)lysine from octanoyl-[acyl-carrier-protein]: step 2/2. Catalyzes the radical-mediated insertion of two sulfur atoms into the C-6 and C-8 positions of the octanoyl moiety bound to the lipoyl domains of lipoate-dependent enzymes, thereby converting the octanoylated domains into lipoylated derivatives. The sequence is that of Lipoyl synthase 1, mitochondrial from Pisum sativum (Garden pea).